A 68-amino-acid chain; its full sequence is Glucagon-1 (68 aa).

The protein belongs to the glucagon family.

Its subcellular location is the secreted. Promotes hydrolysis of glycogen and lipids, and raises the blood sugar level. The sequence is that of Glucagon-1 (gcg) from Oncorhynchus kisutch (Coho salmon).